Reading from the N-terminus, the 283-residue chain is Bifunctional protein FolD (283 aa).

Residues 166–168 (GAS) and Ile-232 contribute to the NADP(+) site.

It belongs to the tetrahydrofolate dehydrogenase/cyclohydrolase family. Homodimer.

The enzyme catalyses (6R)-5,10-methylene-5,6,7,8-tetrahydrofolate + NADP(+) = (6R)-5,10-methenyltetrahydrofolate + NADPH. The catalysed reaction is (6R)-5,10-methenyltetrahydrofolate + H2O = (6R)-10-formyltetrahydrofolate + H(+). It functions in the pathway one-carbon metabolism; tetrahydrofolate interconversion. Its function is as follows. Catalyzes the oxidation of 5,10-methylenetetrahydrofolate to 5,10-methenyltetrahydrofolate and then the hydrolysis of 5,10-methenyltetrahydrofolate to 10-formyltetrahydrofolate. The protein is Bifunctional protein FolD of Wigglesworthia glossinidia brevipalpis.